The following is a 277-amino-acid chain: Tumor necrosis factor receptor superfamily member 4 (277 aa).

Positions 1 to 28 (MCVGARRLGRGPCAALLLLGLGLSTVTG) are cleaved as a signal peptide. Topologically, residues 29–214 (LHCVGDTYPS…RPVEVPGGRA (186 aa)) are extracellular. TNFR-Cys repeat units follow at residues 30-65 (HCVG…TVCR) and 66-107 (PCGP…DTVC). Cystine bridges form between Cys31–Cys42, Cys43–Cys56, Cys46–Cys64, Cys67–Cys81, Cys84–Cys99, Cys87–Cys107, Cys109–Cys125, and Cys128–Cys141. The TNFR-Cys 3; truncated repeat unit spans residues 108–126 (RCRAGTQPLDSYKPGVDCA). The stretch at 127 to 167 (PCPPGHFSPGDNQACKPWTNCTLAGKHTLQPASNSSDAICE) is one TNFR-Cys 4 repeat. Asn146 and Asn160 each carry an N-linked (GlcNAc...) asparagine glycan. Residues Cys147 and Cys166 are joined by a disulfide bond. The disordered stretch occupies residues 158 to 209 (ASNSSDAICEDRDPPATQPQETQGPPARPITVQPTEAWPRTSQGPSTRPVEV). Residues 215–235 (VAAILGLGLVLGLLGPLAILL) traverse the membrane as a helical segment. Residues 236 to 277 (ALYLLRRDQRLPPDAHKPPGGGSFRTPIQEEQADAHSTLAKI) lie on the Cytoplasmic side of the membrane. Residues 248–277 (PDAHKPPGGGSFRTPIQEEQADAHSTLAKI) form a disordered region.

As to quaternary structure, interacts with TRAF2, TRAF3 and TRAF5. (Microbial infection) Interacts with Human herpesvirus 6B/HHV-6B gQ1:gQ2 proteins.

Its subcellular location is the membrane. Functionally, receptor for TNFSF4/OX40L/GP34. Is a costimulatory molecule implicated in long-term T-cell immunity. In terms of biological role, (Microbial infection) Acts as a receptor for human herpesvirus 6B/HHV-6B. This Homo sapiens (Human) protein is Tumor necrosis factor receptor superfamily member 4 (TNFRSF4).